Reading from the N-terminus, the 217-residue chain is Cytidylate kinase (217 aa).

9-17 (GPSSSGKSS) contributes to the ATP binding site.

The protein belongs to the cytidylate kinase family. Type 1 subfamily.

It is found in the cytoplasm. It catalyses the reaction CMP + ATP = CDP + ADP. The catalysed reaction is dCMP + ATP = dCDP + ADP. The protein is Cytidylate kinase of Mycoplasma genitalium (strain ATCC 33530 / DSM 19775 / NCTC 10195 / G37) (Mycoplasmoides genitalium).